Consider the following 315-residue polypeptide: Phosphomutase-like protein 3 (315 aa).

The signal sequence occupies residues 1–19 (MQQFLTLGALWTLFNVATT). The active-site Tele-phosphohistidine intermediate is His77. Residues Asn88 and Asn154 are each glycosylated (N-linked (GlcNAc...) asparagine). Glu173 functions as the Proton donor/acceptor in the catalytic mechanism. The N-linked (GlcNAc...) asparagine glycan is linked to Asn185. The GPI-anchor amidated asparagine moiety is linked to residue Asn286. Residues 287–315 (DAWDTFKDWCPNPPASISGTATSTATGSA) constitute a propeptide, removed in mature form.

The protein belongs to the phosphoglycerate mutase family.

It localises to the cell membrane. This is Phosphomutase-like protein 3 (PGA12) from Candida albicans (strain SC5314 / ATCC MYA-2876) (Yeast).